Here is a 393-residue protein sequence, read N- to C-terminus: S-adenosylmethionine synthase (393 aa).

Glu-9 is a Mg(2+) binding site. His-15 is an ATP binding site. Asp-17 is a Mg(2+) binding site. Glu-43 is a binding site for K(+). L-methionine-binding residues include Glu-56 and Gln-99. ATP-binding positions include 167-169 (DGK), 235-238 (SGRF), Asp-246, 252-253 (RK), Ala-269, Lys-273, and Lys-277. Asp-246 contributes to the L-methionine binding site. Lys-277 contributes to the L-methionine binding site.

Belongs to the AdoMet synthase family. Homotetramer; dimer of dimers. Requires Mn(2+) as cofactor. The cofactor is Mg(2+). Co(2+) serves as cofactor. K(+) is required as a cofactor.

The protein resides in the cytoplasm. The catalysed reaction is L-methionine + ATP + H2O = S-adenosyl-L-methionine + phosphate + diphosphate. The protein operates within amino-acid biosynthesis; S-adenosyl-L-methionine biosynthesis; S-adenosyl-L-methionine from L-methionine: step 1/1. Increased activity in the presence of 25 percent acetonitrile, methanol or dimethylformamide. Catalyzes the formation of S-adenosylmethionine from methionine and ATP. In Acacia koa (Koa tree), this protein is S-adenosylmethionine synthase.